The chain runs to 317 residues: Probable deoxyhypusine synthase 1 (317 aa).

Residue Lys285 is the Nucleophile of the active site.

Belongs to the deoxyhypusine synthase family. Requires NAD(+) as cofactor.

It carries out the reaction [eIF5A protein]-L-lysine + spermidine = [eIF5A protein]-deoxyhypusine + propane-1,3-diamine. Its pathway is protein modification; eIF5A hypusination. Functionally, catalyzes the NAD-dependent oxidative cleavage of spermidine and the subsequent transfer of the butylamine moiety of spermidine to the epsilon-amino group of a specific lysine residue of the eIF-5A precursor protein to form the intermediate deoxyhypusine residue. In Methanosarcina acetivorans (strain ATCC 35395 / DSM 2834 / JCM 12185 / C2A), this protein is Probable deoxyhypusine synthase 1 (dys1).